The chain runs to 97 residues: UPF0729 protein GD16342 (97 aa).

The disordered stretch occupies residues 64–97; the sequence is KPEKASVGPAEESQNPPLNAIAAETEVDESKKEI. Position 69 is a phosphoserine (serine 69).

The protein belongs to the UPF0729 family.

The protein is UPF0729 protein GD16342 of Drosophila simulans (Fruit fly).